Consider the following 296-residue polypeptide: Glycine--tRNA ligase alpha subunit (296 aa).

This sequence belongs to the class-II aminoacyl-tRNA synthetase family. Tetramer of two alpha and two beta subunits.

Its subcellular location is the cytoplasm. The enzyme catalyses tRNA(Gly) + glycine + ATP = glycyl-tRNA(Gly) + AMP + diphosphate. This is Glycine--tRNA ligase alpha subunit from Listeria monocytogenes serotype 4b (strain CLIP80459).